We begin with the raw amino-acid sequence, 434 residues long: Eukaryotic translation initiation factor 3 subunit E-2 (434 aa).

Positions Phe219 to Leu392 constitute a PCI domain.

It belongs to the eIF-3 subunit E family. Component of the eukaryotic translation initiation factor 3 (eIF-3) complex. The eIF-3 complex interacts with pix. Interacts with mxt.

It is found in the cytoplasm. In terms of biological role, component of the eukaryotic translation initiation factor 3 (eIF-3) complex, which is involved in protein synthesis of a specialized repertoire of mRNAs and, together with other initiation factors, stimulates binding of mRNA and methionyl-tRNAi to the 40S ribosome. The eIF-3 complex specifically targets and initiates translation of a subset of mRNAs involved in cell proliferation. This chain is Eukaryotic translation initiation factor 3 subunit E-2 (eIF3-S6-2), found in Drosophila willistoni (Fruit fly).